Consider the following 407-residue polypeptide: E3 ubiquitin-protein ligase IE2 (407 aa).

Polar residues predominate over residues 1–10; it reads MSRQINAATP. Residues 1–69 form a disordered region; the sequence is MSRQINAATP…RVSEENVQII (69 aa). Residues 13-25 are compositionally biased toward basic residues; the sequence is SRHHRLSLSRRRI. Over residues 31-47 the composition is skewed to low complexity; that stretch reads SEAQPSSSSRSQTSSSS. Positions 127–158 form a coiled coil; it reads QQYQNNIASETAAQRALQRALDLEAQLMNEIA. The tract at residues 179–200 is disordered; it reads QSPDLFASPQSSEQQQQSEPEE. A compositionally biased stretch (low complexity) spans 186 to 196; it reads SPQSSEQQQQS. Residues 206–254 form an RING-type; degenerate zinc finger; sequence CNICFTTFKDTKNVNSSFVTTTHCNHAVCFKCYVKIIMANSVYKCFCSA. Positions 336-393 form a coiled coil; sequence LKHKHAVAELDLQKANYDLQESTKKSEELQSTVNNLQEQLNKQVVESQAKFLEFERNN.

This sequence belongs to the alphabaculovirus IE2 protein family. As to quaternary structure, homooligomer. Post-translationally, auto-ubiquitinated.

It localises to the host nucleus. The enzyme catalyses S-ubiquitinyl-[E2 ubiquitin-conjugating enzyme]-L-cysteine + [acceptor protein]-L-lysine = [E2 ubiquitin-conjugating enzyme]-L-cysteine + N(6)-ubiquitinyl-[acceptor protein]-L-lysine.. Its function is as follows. RING-finger E3 ubiquitin ligase that plays an important regulatory role during the initial stages of infection. Migrates to specific nuclear foci early in infection supposely to prepare the sites for viral replication by targeting and ubiquitinating host proteins. The sequence is that of E3 ubiquitin-protein ligase IE2 (IE2) from Rachiplusia ou multiple nucleopolyhedrovirus (strain R1) (RoMNPV).